A 118-amino-acid chain; its full sequence is MRVKGGVNSKKKKRKYLKAAKGYRGALSRRYRLAKQYYIRSGVYAYVGRKQKKRDFRKLWITRINAAARMEGIKYSELIHGLKLSGVNINRKMLADLAVNDFEAFKEYVALAKEALGK.

Belongs to the bacterial ribosomal protein bL20 family.

Binds directly to 23S ribosomal RNA and is necessary for the in vitro assembly process of the 50S ribosomal subunit. It is not involved in the protein synthesizing functions of that subunit. The sequence is that of Large ribosomal subunit protein bL20 from Kosmotoga olearia (strain ATCC BAA-1733 / DSM 21960 / TBF 19.5.1).